Consider the following 102-residue polypeptide: S-phase delaying protein 2 (102 aa).

A disordered region spans residues 43–62 (FPSYHKDQTDRNELPQQKHD). Positions 46–62 (YHKDQTDRNELPQQKHD) are enriched in basic and acidic residues.

The protein belongs to the DIF1/spd1 family.

The protein resides in the cytoplasm. The protein localises to the nucleus. In terms of biological role, regulates the ribonucleotide reductase activity. The protein is S-phase delaying protein 2 (spd2) of Schizosaccharomyces pombe (strain 972 / ATCC 24843) (Fission yeast).